The sequence spans 325 residues: CRISPR-associated endonuclease Cas1 3 (325 aa).

3 residues coordinate Mn(2+): Glu-152, His-217, and Glu-232.

This sequence belongs to the CRISPR-associated endonuclease Cas1 family. Homodimer, forms a heterotetramer with a Cas2 homodimer. Requires Mg(2+) as cofactor. Mn(2+) serves as cofactor.

Functionally, CRISPR (clustered regularly interspaced short palindromic repeat), is an adaptive immune system that provides protection against mobile genetic elements (viruses, transposable elements and conjugative plasmids). CRISPR clusters contain spacers, sequences complementary to antecedent mobile elements, and target invading nucleic acids. CRISPR clusters are transcribed and processed into CRISPR RNA (crRNA). Acts as a dsDNA endonuclease. Involved in the integration of spacer DNA into the CRISPR cassette. The protein is CRISPR-associated endonuclease Cas1 3 of Thermodesulfovibrio yellowstonii (strain ATCC 51303 / DSM 11347 / YP87).